A 219-amino-acid chain; its full sequence is Thiopurine S-methyltransferase (219 aa).

S-adenosyl-L-methionine is bound by residues W10, L45, E66, and R130.

Belongs to the class I-like SAM-binding methyltransferase superfamily. TPMT family.

It localises to the cytoplasm. It catalyses the reaction S-adenosyl-L-methionine + a thiopurine = S-adenosyl-L-homocysteine + a thiopurine S-methylether.. In Psychrobacter cryohalolentis (strain ATCC BAA-1226 / DSM 17306 / VKM B-2378 / K5), this protein is Thiopurine S-methyltransferase.